Consider the following 307-residue polypeptide: Protein phosphatase PTC7 homolog fig (307 aa).

The region spanning 41–300 is the PPM-type phosphatase domain; sequence VQGSSKDQQL…DDITVILASV (260 aa). 3 residues coordinate Mn(2+): aspartate 77, glycine 78, and aspartate 222.

Belongs to the PP2C family. Mg(2+) serves as cofactor. The cofactor is Mn(2+).

The enzyme catalyses O-phospho-L-seryl-[protein] + H2O = L-seryl-[protein] + phosphate. It catalyses the reaction O-phospho-L-threonyl-[protein] + H2O = L-threonyl-[protein] + phosphate. The polypeptide is Protein phosphatase PTC7 homolog fig (Drosophila grimshawi (Hawaiian fruit fly)).